We begin with the raw amino-acid sequence, 402 residues long: NADH-quinone oxidoreductase subunit D (402 aa).

This sequence belongs to the complex I 49 kDa subunit family. As to quaternary structure, NDH-1 is composed of 14 different subunits. Subunits NuoB, C, D, E, F, and G constitute the peripheral sector of the complex.

Its subcellular location is the cell inner membrane. The enzyme catalyses a quinone + NADH + 5 H(+)(in) = a quinol + NAD(+) + 4 H(+)(out). Functionally, NDH-1 shuttles electrons from NADH, via FMN and iron-sulfur (Fe-S) centers, to quinones in the respiratory chain. The immediate electron acceptor for the enzyme in this species is believed to be ubiquinone. Couples the redox reaction to proton translocation (for every two electrons transferred, four hydrogen ions are translocated across the cytoplasmic membrane), and thus conserves the redox energy in a proton gradient. The protein is NADH-quinone oxidoreductase subunit D of Rhodopseudomonas palustris (strain TIE-1).